The sequence spans 462 residues: N-myc proto-oncogene protein (462 aa).

Positions 19–47 (LEFDSLQPCFYPDEDDFYFGGPDSTPPGE) are interaction with AURKA. The segment at 61 to 90 (LSPSRAFPEHSPEPSNWATEMLLPEADLWG) is interaction with AURKA and FBXW7. Positions 76 to 85 (NWATEMLLPE) match the 9aaTAD motif. Disordered stretches follow at residues 134–177 (KLQH…ATLP), 232–289 (AAPA…SSNN), and 332–390 (APSP…LERQ). 2 stretches are compositionally biased toward low complexity: residues 143-176 (GVSSACSAPGVGASSPGGRALGGSSSASHTGATL) and 232-244 (AAPARAGGRPASS). Residues 257 to 276 (TLSDSDDEDDEEEDEEEEID) show a composition bias toward acidic residues. 2 positions are modified to phosphoserine; by CK2: serine 259 and serine 261. Positions 379-431 (ERRRNHNILERQRRNDLRSSFLTLRDHVPELVKNEKAAKVVILKKATEYVHAL) constitute a bHLH domain. The segment at 431 to 452 (LQANEHQLLLEKEKLQARQQQL) is leucine-zipper.

In terms of assembly, efficient DNA binding requires dimerization with another bHLH protein. Binds DNA as a heterodimer with MAX. Interacts with KDM5A, KDM5B and HUWE1. Interacts with MYCNOS. Interacts with AURKA; interaction is phospho-independent and triggers AURKA activation; AURKA competes with FBXW7 for binding to unphosphorylated MYCN but not for binding to unphosphorylated MYCN. Interacts with FBXW7; FBXW7 competes with AURKA for binding to unphosphorylated MYCN but not for binding to phosphorylated MYCN. Phosphorylated by GSK3-beta which may promote its degradation. Phosphorylated by AURKA.

It is found in the nucleus. Its function is as follows. Positively regulates the transcription of MYCNOS in neuroblastoma cells. The sequence is that of N-myc proto-oncogene protein (Mycn) from Mus musculus (Mouse).